The primary structure comprises 201 residues: Holliday junction resolvase RecU (201 aa).

The Mg(2+) site is built by threonine 85, aspartate 87, glutamate 100, and glutamine 119.

This sequence belongs to the RecU family. Mg(2+) is required as a cofactor.

Its subcellular location is the cytoplasm. The catalysed reaction is Endonucleolytic cleavage at a junction such as a reciprocal single-stranded crossover between two homologous DNA duplexes (Holliday junction).. In terms of biological role, endonuclease that resolves Holliday junction intermediates in genetic recombination. Cleaves mobile four-strand junctions by introducing symmetrical nicks in paired strands. Promotes annealing of linear ssDNA with homologous dsDNA. Required for DNA repair, homologous recombination and chromosome segregation. In Geobacillus sp. (strain WCH70), this protein is Holliday junction resolvase RecU.